Here is a 400-residue protein sequence, read N- to C-terminus: DNA primase large subunit PriL (400 aa).

4 residues coordinate [4Fe-4S] cluster: C247, C356, C367, and C373.

It belongs to the eukaryotic-type primase large subunit family. In terms of assembly, heterodimer of a small subunit (PriS) and a large subunit (PriL). [4Fe-4S] cluster serves as cofactor.

Functionally, regulatory subunit of DNA primase, an RNA polymerase that catalyzes the synthesis of short RNA molecules used as primers for DNA polymerase during DNA replication. Stabilizes and modulates the activity of the small subunit, increasing the rate of DNA synthesis, and conferring RNA synthesis capability. The DNA polymerase activity may enable DNA primase to also catalyze primer extension after primer synthesis. May also play a role in DNA repair. In Thermococcus kodakarensis (strain ATCC BAA-918 / JCM 12380 / KOD1) (Pyrococcus kodakaraensis (strain KOD1)), this protein is DNA primase large subunit PriL.